The following is a 427-amino-acid chain: Glutamate-1-semialdehyde 2,1-aminomutase (427 aa).

At lysine 265 the chain carries N6-(pyridoxal phosphate)lysine.

The protein belongs to the class-III pyridoxal-phosphate-dependent aminotransferase family. HemL subfamily. As to quaternary structure, homodimer. Requires pyridoxal 5'-phosphate as cofactor.

It localises to the cytoplasm. It carries out the reaction (S)-4-amino-5-oxopentanoate = 5-aminolevulinate. Its pathway is porphyrin-containing compound metabolism; protoporphyrin-IX biosynthesis; 5-aminolevulinate from L-glutamyl-tRNA(Glu): step 2/2. This chain is Glutamate-1-semialdehyde 2,1-aminomutase, found in Paraburkholderia phytofirmans (strain DSM 17436 / LMG 22146 / PsJN) (Burkholderia phytofirmans).